The sequence spans 163 residues: Disulfide bond formation protein B (163 aa).

Residues 1–9 lie on the Cytoplasmic side of the membrane; sequence MRLASPRSL. Residues 10–26 form a helical membrane-spanning segment; sequence FVIAFLGSALLIAIALY. At 27-44 the chain is on the periplasmic side; that stretch reads MEHVMGLAPCPLCIVQRI. The cysteines at positions 36 and 39 are disulfide-linked. The helical transmembrane segment at 45–61 threads the bilayer; it reads CVIGFGLVCLVAAIHGP. The Cytoplasmic portion of the chain corresponds to 62-67; that stretch reads AKVGRR. The chain crosses the membrane as a helical span at residues 68–85; sequence VYAAIAALFVAAGAATAI. Topologically, residues 86 to 142 are periplasmic; that stretch reads RQIWLQSVPADQLPSCLPSLEYMMEALPFQEIARLVLHGTAECAEVSWTMLGMSIPE. A disulfide bond links C101 and C128. A helical transmembrane segment spans residues 143-161; the sequence is WSLLGFIGMAIVCLWQLLR. The Cytoplasmic portion of the chain corresponds to 162–163; it reads RD.

This sequence belongs to the DsbB family.

Its subcellular location is the cell inner membrane. Functionally, required for disulfide bond formation in some periplasmic proteins. Acts by oxidizing the DsbA protein. This is Disulfide bond formation protein B from Stutzerimonas stutzeri (strain A1501) (Pseudomonas stutzeri).